Consider the following 366-residue polypeptide: uncharacterized protein (366 aa).

A disordered region spans residues 1 to 135; the sequence is MNQTGRTIGG…PPKNVDTIDK (135 aa). Basic and acidic residues predominate over residues 26 to 38; the sequence is PSEDRVSSRDETP. S69 carries the phosphoserine modification. At T76 the chain carries Phosphothreonine. A Glycyl lysine isopeptide (Lys-Gly) (interchain with G-Cter in ubiquitin) cross-link involves residue K78. The segment covering 97–108 has biased composition (basic residues); sequence QHNHHHHRRTSH. K187 participates in a covalent cross-link: Glycyl lysine isopeptide (Lys-Gly) (interchain with G-Cter in ubiquitin). A Phosphothreonine modification is found at T189. K242 participates in a covalent cross-link: Glycyl lysine isopeptide (Lys-Gly) (interchain with G-Cter in ubiquitin). Phosphoserine occurs at positions 288 and 294. The segment at 313–366 is disordered; it reads THSGHLEQKDVDDNRTSVPVTATQGSGHEDVVKKENTGNKLLRRVKSLKTSKKH. Over residues 316–327 the composition is skewed to basic and acidic residues; the sequence is GHLEQKDVDDNR. The segment covering 328–338 has biased composition (polar residues); it reads TSVPVTATQGS. A compositionally biased stretch (basic and acidic residues) spans 339–349; the sequence is GHEDVVKKENT. Basic residues predominate over residues 353 to 366; it reads LLRRVKSLKTSKKH. S359 carries the post-translational modification Phosphoserine.

The protein belongs to the pal1 family.

It localises to the cytoplasm. The protein resides in the nucleus. This is an uncharacterized protein from Saccharomyces cerevisiae (strain ATCC 204508 / S288c) (Baker's yeast).